Here is a 307-residue protein sequence, read N- to C-terminus: UDP-3-O-acyl-N-acetylglucosamine deacetylase (307 aa).

His-78, His-241, and Asp-245 together coordinate Zn(2+). Catalysis depends on His-268, which acts as the Proton donor.

The protein belongs to the LpxC family. Requires Zn(2+) as cofactor.

The catalysed reaction is a UDP-3-O-[(3R)-3-hydroxyacyl]-N-acetyl-alpha-D-glucosamine + H2O = a UDP-3-O-[(3R)-3-hydroxyacyl]-alpha-D-glucosamine + acetate. It functions in the pathway glycolipid biosynthesis; lipid IV(A) biosynthesis; lipid IV(A) from (3R)-3-hydroxytetradecanoyl-[acyl-carrier-protein] and UDP-N-acetyl-alpha-D-glucosamine: step 2/6. Its function is as follows. Catalyzes the hydrolysis of UDP-3-O-myristoyl-N-acetylglucosamine to form UDP-3-O-myristoylglucosamine and acetate, the committed step in lipid A biosynthesis. In Delftia acidovorans (strain DSM 14801 / SPH-1), this protein is UDP-3-O-acyl-N-acetylglucosamine deacetylase.